The sequence spans 300 residues: 4-hydroxy-tetrahydrodipicolinate synthase (300 aa).

Residue Thr-46 participates in pyruvate binding. Tyr-134 (proton donor/acceptor) is an active-site residue. Lys-162 (schiff-base intermediate with substrate) is an active-site residue. Pyruvate is bound at residue Val-204.

Belongs to the DapA family. In terms of assembly, homotetramer; dimer of dimers.

It is found in the cytoplasm. It catalyses the reaction L-aspartate 4-semialdehyde + pyruvate = (2S,4S)-4-hydroxy-2,3,4,5-tetrahydrodipicolinate + H2O + H(+). Its pathway is amino-acid biosynthesis; L-lysine biosynthesis via DAP pathway; (S)-tetrahydrodipicolinate from L-aspartate: step 3/4. Functionally, catalyzes the condensation of (S)-aspartate-beta-semialdehyde [(S)-ASA] and pyruvate to 4-hydroxy-tetrahydrodipicolinate (HTPA). The polypeptide is 4-hydroxy-tetrahydrodipicolinate synthase (Heliobacterium modesticaldum (strain ATCC 51547 / Ice1)).